A 473-amino-acid polypeptide reads, in one-letter code: Lactate utilization protein B (473 aa).

2 consecutive 4Fe-4S ferredoxin-type domains span residues 302–332 (GSEF…GHSY) and 351–380 (YDDY…LHDL). Residues Cys-311, Cys-314, Cys-317, Cys-321, Cys-364, Cys-367, and Cys-371 each coordinate [4Fe-4S] cluster.

Belongs to the LutB/YkgF family.

Its function is as follows. Is involved in L-lactate degradation and allows cells to grow with lactate as the sole carbon source. Has probably a role as an electron transporter during oxidation of L-lactate. The sequence is that of Lactate utilization protein B from Bacillus anthracis (strain A0248).